Reading from the N-terminus, the 38-residue chain is Photosystem II reaction center protein L (38 aa).

A helical transmembrane segment spans residues 17–37; it reads SLYWGLLLIXVLAVLFSNYFF.

Belongs to the PsbL family. PSII is composed of 1 copy each of membrane proteins PsbA, PsbB, PsbC, PsbD, PsbE, PsbF, PsbH, PsbI, PsbJ, PsbK, PsbL, PsbM, PsbT, PsbX, PsbY, PsbZ, Psb30/Ycf12, at least 3 peripheral proteins of the oxygen-evolving complex and a large number of cofactors. It forms dimeric complexes.

It localises to the plastid. Its subcellular location is the chloroplast thylakoid membrane. Its function is as follows. One of the components of the core complex of photosystem II (PSII). PSII is a light-driven water:plastoquinone oxidoreductase that uses light energy to abstract electrons from H(2)O, generating O(2) and a proton gradient subsequently used for ATP formation. It consists of a core antenna complex that captures photons, and an electron transfer chain that converts photonic excitation into a charge separation. This subunit is found at the monomer-monomer interface and is required for correct PSII assembly and/or dimerization. The sequence is that of Photosystem II reaction center protein L from Allium textile (Textile onion).